Consider the following 568-residue polypeptide: Urease subunit alpha (568 aa).

In terms of domain architecture, Urease spans 131-568 (GGMDAHIHFI…LPLAQRYFLY (438 aa)). Ni(2+)-binding residues include His136, His138, and Lys219. Lys219 bears the N6-carboxylysine mark. His221 is a binding site for substrate. Ni(2+) contacts are provided by His248 and His274. Residue His322 is the Proton donor of the active site. Asp362 contacts Ni(2+).

This sequence belongs to the metallo-dependent hydrolases superfamily. Urease alpha subunit family. Heterotrimer of UreA (gamma), UreB (beta) and UreC (alpha) subunits. Three heterotrimers associate to form the active enzyme. Ni cation serves as cofactor. In terms of processing, carboxylation allows a single lysine to coordinate two nickel ions.

The protein resides in the cytoplasm. It catalyses the reaction urea + 2 H2O + H(+) = hydrogencarbonate + 2 NH4(+). Its pathway is nitrogen metabolism; urea degradation; CO(2) and NH(3) from urea (urease route): step 1/1. This Cereibacter sphaeroides (strain ATCC 17025 / ATH 2.4.3) (Rhodobacter sphaeroides) protein is Urease subunit alpha.